The following is a 109-amino-acid chain: Large ribosomal subunit protein uL22 (109 aa).

This sequence belongs to the universal ribosomal protein uL22 family. In terms of assembly, part of the 50S ribosomal subunit.

In terms of biological role, this protein binds specifically to 23S rRNA; its binding is stimulated by other ribosomal proteins, e.g. L4, L17, and L20. It is important during the early stages of 50S assembly. It makes multiple contacts with different domains of the 23S rRNA in the assembled 50S subunit and ribosome. Functionally, the globular domain of the protein is located near the polypeptide exit tunnel on the outside of the subunit, while an extended beta-hairpin is found that lines the wall of the exit tunnel in the center of the 70S ribosome. The polypeptide is Large ribosomal subunit protein uL22 (Wolinella succinogenes (strain ATCC 29543 / DSM 1740 / CCUG 13145 / JCM 31913 / LMG 7466 / NCTC 11488 / FDC 602W) (Vibrio succinogenes)).